The chain runs to 505 residues: Trans-cinnamate 4-monooxygenase (505 aa).

The chain crosses the membrane as a helical span at residues 3 to 23; the sequence is LLLLEKTLLGLFAAIIVASIV. (E)-cinnamate contacts are provided by residues 213 to 218 and Ala-306; that span reads RSRLAQ. Cys-447 is a heme binding site.

This sequence belongs to the cytochrome P450 family. Heme serves as cofactor.

The protein localises to the membrane. It carries out the reaction (E)-cinnamate + reduced [NADPH--hemoprotein reductase] + O2 = (E)-4-coumarate + oxidized [NADPH--hemoprotein reductase] + H2O + H(+). The protein operates within phenylpropanoid metabolism; trans-4-coumarate biosynthesis; trans-4-coumarate from trans-cinnamate: step 1/1. Its function is as follows. Catalyzes the first oxidative step of the phenylpropanoid pathway in higher plants by transforming trans-cinnamate into p-coumarate. The compounds formed by this pathway are essential components for lignification, pollination, and defense against ultraviolet light, predators and pathogens. This is Trans-cinnamate 4-monooxygenase (CYP73A4) from Catharanthus roseus (Madagascar periwinkle).